The sequence spans 405 residues: Probable tRNA sulfurtransferase (405 aa).

The 109-residue stretch at 75-183 (PRAAGAAADV…QNLAYVYLET (109 aa)) folds into the THUMP domain. Residues 201–202 (LM), Lys285, Gly307, and Gln316 each bind ATP.

This sequence belongs to the ThiI family.

It localises to the cytoplasm. The enzyme catalyses [ThiI sulfur-carrier protein]-S-sulfanyl-L-cysteine + a uridine in tRNA + 2 reduced [2Fe-2S]-[ferredoxin] + ATP + H(+) = [ThiI sulfur-carrier protein]-L-cysteine + a 4-thiouridine in tRNA + 2 oxidized [2Fe-2S]-[ferredoxin] + AMP + diphosphate. It carries out the reaction [ThiS sulfur-carrier protein]-C-terminal Gly-Gly-AMP + S-sulfanyl-L-cysteinyl-[cysteine desulfurase] + AH2 = [ThiS sulfur-carrier protein]-C-terminal-Gly-aminoethanethioate + L-cysteinyl-[cysteine desulfurase] + A + AMP + 2 H(+). It participates in cofactor biosynthesis; thiamine diphosphate biosynthesis. Catalyzes the ATP-dependent transfer of a sulfur to tRNA to produce 4-thiouridine in position 8 of tRNAs, which functions as a near-UV photosensor. Also catalyzes the transfer of sulfur to the sulfur carrier protein ThiS, forming ThiS-thiocarboxylate. This is a step in the synthesis of thiazole, in the thiamine biosynthesis pathway. The sulfur is donated as persulfide by IscS. This Methanosarcina mazei (strain ATCC BAA-159 / DSM 3647 / Goe1 / Go1 / JCM 11833 / OCM 88) (Methanosarcina frisia) protein is Probable tRNA sulfurtransferase.